The sequence spans 376 residues: MVSEQSSNRSHPLDYYMDNQSTDHHTIAEDLEMQLTENDKQRIKSISEQIEPLNHEGLLKYGANLQQKMSHFSHQILDDVQSKDMGPVGETLSQLMGKLKSVNPNDINPEKQSRLKRLFKRTKASINEVFSRMQSVSSQIDRITIQLEKHKDQLTKDVEFLDQLYQENKTYFDNVSLYILAAQKKKKEILTETIPQLREKAHQTGNQMDIQATADMEQFVDRLDKRIYDLQLSRQIAIQTAPQIRMIQNVNQALAEKIQSSILTSIPLWKNQMAIALTLMRQRNAVSAQRSVTDTTNELLTQNASMLKKNAIETAAENERGIVDIETLKTTQNDIIETIEQTLQIQEDGRQKRQVAEKELNELEQDLKQHLLSMRK.

Belongs to the TelA family.

This chain is TelA-like protein SERP0976, found in Staphylococcus epidermidis (strain ATCC 35984 / DSM 28319 / BCRC 17069 / CCUG 31568 / BM 3577 / RP62A).